The following is a 437-amino-acid chain: Adenylosuccinate synthetase (437 aa).

GTP is bound by residues 12 to 18 and 40 to 42; these read GDEGKGK and GHT. Aspartate 13 serves as the catalytic Proton acceptor. 2 residues coordinate Mg(2+): aspartate 13 and glycine 40. IMP contacts are provided by residues 13-16, 38-41, threonine 128, arginine 142, glutamine 223, threonine 238, and arginine 302; these read DEGK and NAGH. The active-site Proton donor is histidine 41. Residue 298–304 coordinates substrate; that stretch reads TTTGRRR. GTP contacts are provided by residues arginine 304, 330–332, and 412–414; these read KLD and SLG.

The protein belongs to the adenylosuccinate synthetase family. As to quaternary structure, homodimer. Mg(2+) serves as cofactor.

The protein localises to the cytoplasm. It carries out the reaction IMP + L-aspartate + GTP = N(6)-(1,2-dicarboxyethyl)-AMP + GDP + phosphate + 2 H(+). Its pathway is purine metabolism; AMP biosynthesis via de novo pathway; AMP from IMP: step 1/2. Plays an important role in the de novo pathway of purine nucleotide biosynthesis. Catalyzes the first committed step in the biosynthesis of AMP from IMP. The protein is Adenylosuccinate synthetase of Synechococcus sp. (strain RCC307).